Reading from the N-terminus, the 522-residue chain is Tyrosine-protein phosphatase 1 (522 aa).

Positions 32–63 (RSNSSISLSSSSHSSFSRMGSLGSLPTNSGSS) are disordered. Positions 33-63 (SNSSISLSSSSHSSFSRMGSLGSLPTNSGSS) are enriched in low complexity. One can recognise a Tyrosine-protein phosphatase domain in the interval 97–471 (IKEEFRLLEE…LFCYKTILDE (375 aa)). C310 functions as the Phosphocysteine intermediate in the catalytic mechanism. A PTPase insert (Asn-rich) region spans residues 327–426 (MKKLDHYFKQ…DDAAESDLKY (100 aa)). Over residues 382–410 (NNNNNNNLNNNNNINNNSNGSNNTPQTEP) the composition is skewed to low complexity. The tract at residues 382-420 (NNNNNNNLNNNNNINNNSNGSNNTPQTEPNNEEDDDDAA) is disordered. A compositionally biased stretch (acidic residues) spans 411–420 (NNEEDDDDAA).

It belongs to the protein-tyrosine phosphatase family. Non-receptor class subfamily. Expressed predominantly in anterior-like cells and to a lesser degree in prestalk cells.

It localises to the cytoplasm. Its subcellular location is the cell membrane. The catalysed reaction is O-phospho-L-tyrosyl-[protein] + H2O = L-tyrosyl-[protein] + phosphate. Its function is as follows. May have a role in growth and in the early stages of development. Affects the timing of development. The chain is Tyrosine-protein phosphatase 1 (ptpA1-1) from Dictyostelium discoideum (Social amoeba).